The primary structure comprises 154 residues: Ribosomal RNA large subunit methyltransferase H (154 aa).

Residues Leu-71 and Gly-103 each coordinate S-adenosyl-L-methionine.

The protein belongs to the RNA methyltransferase RlmH family. Homodimer.

The protein localises to the cytoplasm. It catalyses the reaction pseudouridine(1915) in 23S rRNA + S-adenosyl-L-methionine = N(3)-methylpseudouridine(1915) in 23S rRNA + S-adenosyl-L-homocysteine + H(+). Its function is as follows. Specifically methylates the pseudouridine at position 1915 (m3Psi1915) in 23S rRNA. This chain is Ribosomal RNA large subunit methyltransferase H, found in Solidesulfovibrio magneticus (strain ATCC 700980 / DSM 13731 / RS-1) (Desulfovibrio magneticus).